The sequence spans 225 residues: Ribosome maturation factor RimM (225 aa).

Residues 144-225 form the PRC barrel domain; it reads ADEFYWVDLI…RIVVDWEADY (82 aa).

The protein belongs to the RimM family. In terms of assembly, binds ribosomal protein uS19.

The protein localises to the cytoplasm. An accessory protein needed during the final step in the assembly of 30S ribosomal subunit, possibly for assembly of the head region. Essential for efficient processing of 16S rRNA. May be needed both before and after RbfA during the maturation of 16S rRNA. It has affinity for free ribosomal 30S subunits but not for 70S ribosomes. This chain is Ribosome maturation factor RimM, found in Burkholderia orbicola (strain AU 1054).